Here is a 251-residue protein sequence, read N- to C-terminus: DNA polymerase sliding clamp 2 (251 aa).

Belongs to the PCNA family. As to quaternary structure, heterotrimer. The subunits circularize to form a toroid; DNA passes through its center. Replication factor C (RFC) is required to load the toroid on the DNA.

Its function is as follows. Sliding clamp subunit that acts as a moving platform for DNA processing. Responsible for tethering the catalytic subunit of DNA polymerase and other proteins to DNA during high-speed replication. The polypeptide is DNA polymerase sliding clamp 2 (Aeropyrum pernix (strain ATCC 700893 / DSM 11879 / JCM 9820 / NBRC 100138 / K1)).